Consider the following 614-residue polypeptide: Probable LRR receptor-like serine/threonine-protein kinase At5g63710 (614 aa).

A signal peptide spans 1–50; the sequence is MAHSGNGESFHDPLRGFIQRNCFRWNNQKLILQCFMALAFVGITSSTTQP. Residues 51-224 lie on the Extracellular side of the membrane; it reads DIEGGALLQL…VTSSKKKLRD (174 aa). N-linked (GlcNAc...) asparagine glycans are attached at residues Asn65, Asn125, Asn146, and Asn175. LRR repeat units lie at residues 115-139, 141-163, and 164-187; these read LKFL…LGNM, NLQT…WSQL, and SNLK…FFSI. The chain crosses the membrane as a helical span at residues 225–245; sequence ITLTASCVASIILFLGAMVMY. The Cytoplasmic portion of the chain corresponds to 246 to 613; that stretch reads HHHRVRRTKY…DQESIRLSTA (368 aa). Residue Thr286 is modified to Phosphothreonine. Residues 289–573 enclose the Protein kinase domain; that stretch reads FNESNLIGQG…GTGGLAEKWT (285 aa). 295-303 is an ATP binding site; it reads IGQGGFGKV. Thr312 carries the post-translational modification Phosphothreonine. Residue Lys317 coordinates ATP. A Phosphoserine modification is found at Ser370. Thr389 is subject to Phosphothreonine. Catalysis depends on Asp416, which acts as the Proton acceptor. Phosphothreonine occurs at positions 449, 450, and 455. Tyr463 is subject to Phosphotyrosine. Thr466 bears the Phosphothreonine mark. Ser470 is modified (phosphoserine). Thr545 is subject to Phosphothreonine.

It belongs to the protein kinase superfamily. Ser/Thr protein kinase family.

Its subcellular location is the cell membrane. The catalysed reaction is L-seryl-[protein] + ATP = O-phospho-L-seryl-[protein] + ADP + H(+). The enzyme catalyses L-threonyl-[protein] + ATP = O-phospho-L-threonyl-[protein] + ADP + H(+). This Arabidopsis thaliana (Mouse-ear cress) protein is Probable LRR receptor-like serine/threonine-protein kinase At5g63710.